The primary structure comprises 178 residues: GTP-dependent dephospho-CoA kinase (178 aa).

The GTP site is built by Asp55, Val57, Asp74, Lys76, and Glu127.

It belongs to the GTP-dependent DPCK family.

The enzyme catalyses 3'-dephospho-CoA + GTP = GDP + CoA + H(+). It participates in cofactor biosynthesis; coenzyme A biosynthesis. Functionally, catalyzes the GTP-dependent phosphorylation of the 3'-hydroxyl group of dephosphocoenzyme A to form coenzyme A (CoA). This chain is GTP-dependent dephospho-CoA kinase, found in Saccharolobus islandicus (strain Y.N.15.51 / Yellowstone #2) (Sulfolobus islandicus).